The chain runs to 308 residues: tRNA dimethylallyltransferase (308 aa).

An ATP-binding site is contributed by glycine 14–threonine 21. Threonine 16–threonine 21 serves as a coordination point for substrate. Interaction with substrate tRNA stretches follow at residues aspartate 39–leucine 42, glutamine 163–arginine 167, and arginine 244–arginine 249.

It belongs to the IPP transferase family. Monomer. Mg(2+) serves as cofactor.

It carries out the reaction adenosine(37) in tRNA + dimethylallyl diphosphate = N(6)-dimethylallyladenosine(37) in tRNA + diphosphate. In terms of biological role, catalyzes the transfer of a dimethylallyl group onto the adenine at position 37 in tRNAs that read codons beginning with uridine, leading to the formation of N6-(dimethylallyl)adenosine (i(6)A). The chain is tRNA dimethylallyltransferase from Shewanella halifaxensis (strain HAW-EB4).